Here is a 108-residue protein sequence, read N- to C-terminus: Probable 4-amino-4-deoxy-L-arabinose-phosphoundecaprenol flippase subunit ArnE (108 aa).

Helical transmembrane passes span 36-56 (SLWL…LVLQ), 58-78 (LDVG…TLAG), and 85-105 (PVDV…FQLG).

It belongs to the ArnE family. In terms of assembly, heterodimer of ArnE and ArnF.

It localises to the cell inner membrane. It functions in the pathway bacterial outer membrane biogenesis; lipopolysaccharide biosynthesis. Functionally, translocates 4-amino-4-deoxy-L-arabinose-phosphoundecaprenol (alpha-L-Ara4N-phosphoundecaprenol) from the cytoplasmic to the periplasmic side of the inner membrane. The protein is Probable 4-amino-4-deoxy-L-arabinose-phosphoundecaprenol flippase subunit ArnE of Pseudomonas syringae pv. syringae (strain B728a).